We begin with the raw amino-acid sequence, 184 residues long: Secreted protein B (184 aa).

Residues 1-19 form the signal peptide; the sequence is MRFILVLVLILGLVSSSFG. N-linked (GlcNAc...) asparagine glycosylation occurs at Asn-129. The Cell attachment site motif lies at 164-166; that stretch reads RGD.

The protein belongs to the Sct family.

Its subcellular location is the secreted. This Dictyostelium discoideum (Social amoeba) protein is Secreted protein B (29C).